The chain runs to 339 residues: Undecaprenyl-phosphate 4-deoxy-4-formamido-L-arabinose transferase (339 aa).

2 consecutive transmembrane segments (helical) span residues 235 to 255 and 269 to 289; these read LSLV…FLLV and LFVL…GMGL.

Belongs to the glycosyltransferase 2 family.

The protein localises to the cell inner membrane. It carries out the reaction UDP-4-deoxy-4-formamido-beta-L-arabinose + di-trans,octa-cis-undecaprenyl phosphate = 4-deoxy-4-formamido-alpha-L-arabinopyranosyl di-trans,octa-cis-undecaprenyl phosphate + UDP. It functions in the pathway glycolipid biosynthesis; 4-amino-4-deoxy-alpha-L-arabinose undecaprenyl phosphate biosynthesis; 4-amino-4-deoxy-alpha-L-arabinose undecaprenyl phosphate from UDP-4-deoxy-4-formamido-beta-L-arabinose and undecaprenyl phosphate: step 1/2. Its pathway is bacterial outer membrane biogenesis; lipopolysaccharide biosynthesis. Catalyzes the transfer of 4-deoxy-4-formamido-L-arabinose from UDP to undecaprenyl phosphate. The modified arabinose is attached to lipid A and is required for resistance to polymyxin and cationic antimicrobial peptides. The polypeptide is Undecaprenyl-phosphate 4-deoxy-4-formamido-L-arabinose transferase (Pseudomonas aeruginosa (strain LESB58)).